The chain runs to 511 residues: GMP synthase [glutamine-hydrolyzing] (511 aa).

Residues 5 to 195 (DIIVLDFGSQ…AKYICDCEST (191 aa)) enclose the Glutamine amidotransferase type-1 domain. The Nucleophile role is filled by cysteine 82. Active-site residues include histidine 169 and glutamate 171. Residues 196–386 (WNMGNFAKIK…LGLSPDLVYR (191 aa)) enclose the GMPS ATP-PPase domain. Residue 223–229 (SGGVDSS) participates in ATP binding.

In terms of assembly, homodimer.

The enzyme catalyses XMP + L-glutamine + ATP + H2O = GMP + L-glutamate + AMP + diphosphate + 2 H(+). It functions in the pathway purine metabolism; GMP biosynthesis; GMP from XMP (L-Gln route): step 1/1. Its function is as follows. Catalyzes the synthesis of GMP from XMP. The sequence is that of GMP synthase [glutamine-hydrolyzing] from Campylobacter hominis (strain ATCC BAA-381 / DSM 21671 / CCUG 45161 / LMG 19568 / NCTC 13146 / CH001A).